The chain runs to 406 residues: 2,3-bisphosphoglycerate-independent phosphoglycerate mutase (406 aa).

Belongs to the BPG-independent phosphoglycerate mutase family. A-PGAM subfamily.

The catalysed reaction is (2R)-2-phosphoglycerate = (2R)-3-phosphoglycerate. It functions in the pathway carbohydrate degradation; glycolysis; pyruvate from D-glyceraldehyde 3-phosphate: step 3/5. Its function is as follows. Catalyzes the interconversion of 2-phosphoglycerate and 3-phosphoglycerate. This chain is 2,3-bisphosphoglycerate-independent phosphoglycerate mutase, found in Methanococcus maripaludis (strain C7 / ATCC BAA-1331).